We begin with the raw amino-acid sequence, 100 residues long: Integration host factor subunit alpha (100 aa).

This sequence belongs to the bacterial histone-like protein family. As to quaternary structure, heterodimer of an alpha and a beta chain.

Its function is as follows. This protein is one of the two subunits of integration host factor, a specific DNA-binding protein that functions in genetic recombination as well as in transcriptional and translational control. Involved in hydrogenase gene expression. The chain is Integration host factor subunit alpha (ihfA) from Rhodobacter capsulatus (Rhodopseudomonas capsulata).